Here is a 338-residue protein sequence, read N- to C-terminus: Fructose-1,6-bisphosphatase class 1 (338 aa).

Mg(2+) contacts are provided by E92, D114, L116, and D117. Residues 117–120 (DGSS), N210, Y243, and K276 contribute to the substrate site. E282 provides a ligand contact to Mg(2+).

The protein belongs to the FBPase class 1 family. Homotetramer. The cofactor is Mg(2+).

The protein localises to the cytoplasm. It catalyses the reaction beta-D-fructose 1,6-bisphosphate + H2O = beta-D-fructose 6-phosphate + phosphate. Its pathway is carbohydrate biosynthesis; gluconeogenesis. The sequence is that of Fructose-1,6-bisphosphatase class 1 from Maridesulfovibrio salexigens (strain ATCC 14822 / DSM 2638 / NCIMB 8403 / VKM B-1763) (Desulfovibrio salexigens).